The following is a 277-amino-acid chain: MKKTQQKEIENVTNITGVRQIELWRRDDLQHPRLDEVAEEVPVALVYNGISHVVMMASPKDLEYFALGFSLSEGIIESPRDIFGMDVVPSCNGLEVQIELSSRRFMGLKERRRALAGRTGCGVCGVEQLNDIGKPVQPLPFTQTFDLNKLDDALRHLNDFQPVGQLTGCTHAAAWMLPSGELVGGHEDVGRHVALDKLLGRRSQEGESWQQGAVLVSSRASYEMVQKSAMCGVEILFAVSAATTLAVEVAERCNLTLVGFCKPGRATVYTHPQRLSN.

The active-site Cysteine persulfide intermediate is cysteine 121. 260–265 (FCKPGR) serves as a coordination point for Mo-bis(molybdopterin guanine dinucleotide).

The protein belongs to the FdhD family.

It localises to the cytoplasm. Its function is as follows. Required for formate dehydrogenase (FDH) activity. Acts as a sulfur carrier protein that transfers sulfur from IscS to the molybdenum cofactor prior to its insertion into FDH. This chain is Sulfur carrier protein FdhD, found in Escherichia coli O81 (strain ED1a).